We begin with the raw amino-acid sequence, 172 residues long: 3-hydroxydecanoyl-[acyl-carrier-protein] dehydratase (172 aa).

The active site involves H71.

Belongs to the thioester dehydratase family. FabA subfamily. As to quaternary structure, homodimer.

Its subcellular location is the cytoplasm. It carries out the reaction a (3R)-hydroxyacyl-[ACP] = a (2E)-enoyl-[ACP] + H2O. The enzyme catalyses (3R)-hydroxydecanoyl-[ACP] = (2E)-decenoyl-[ACP] + H2O. The catalysed reaction is (2E)-decenoyl-[ACP] = (3Z)-decenoyl-[ACP]. It functions in the pathway lipid metabolism; fatty acid biosynthesis. In terms of biological role, necessary for the introduction of cis unsaturation into fatty acids. Catalyzes the dehydration of (3R)-3-hydroxydecanoyl-ACP to E-(2)-decenoyl-ACP and then its isomerization to Z-(3)-decenoyl-ACP. Can catalyze the dehydratase reaction for beta-hydroxyacyl-ACPs with saturated chain lengths up to 16:0, being most active on intermediate chain length. The protein is 3-hydroxydecanoyl-[acyl-carrier-protein] dehydratase of Brucella ovis (strain ATCC 25840 / 63/290 / NCTC 10512).